The sequence spans 326 residues: Virulence factor CaO19.6688 (326 aa).

Disordered stretches follow at residues 19–91, 112–137, 161–184, 222–245, and 276–326; these read FNSL…KLPS, EEDN…GTTK, NTTI…PSFP, NVGQ…NDLL, and YEYG…PKIK. Low complexity-rich tracts occupy residues 21–42, 53–78, and 117–137; these read SLKS…SSSS, NRNT…NTTP, and EQQL…GTTK.

Its function is as follows. Virulence factor involved in pathogen-host interaction. Modulates host pro-inflammatory cytokine interleukin-1 beta (IL1B) expression. The polypeptide is Virulence factor CaO19.6688 (Candida albicans (strain SC5314 / ATCC MYA-2876) (Yeast)).